A 306-amino-acid polypeptide reads, in one-letter code: Homoserine kinase (306 aa).

91 to 101 contributes to the ATP binding site; that stretch reads PLARGLGSSAT.

This sequence belongs to the GHMP kinase family. Homoserine kinase subfamily.

The protein resides in the cytoplasm. It carries out the reaction L-homoserine + ATP = O-phospho-L-homoserine + ADP + H(+). It participates in amino-acid biosynthesis; L-threonine biosynthesis; L-threonine from L-aspartate: step 4/5. Functionally, catalyzes the ATP-dependent phosphorylation of L-homoserine to L-homoserine phosphate. This chain is Homoserine kinase, found in Synechocystis sp. (strain ATCC 27184 / PCC 6803 / Kazusa).